Reading from the N-terminus, the 619-residue chain is MPKNKILIYLLSTTLVLPTLVSPTAYADTPQKDTTAKTTSHDSKKSNDDETSKDTTSKDIDKADKNNTSNQDNNDKKFKTIDDSTSDSNNIIDFIYKNLPQTNINQLLTKNKYDDNYSLTTLIQNLFNLNSDISDYEQPRNGEKSTNDSNKNSDNSIKNDTDTQSSKQDKADNQKAPKSNNTKPSTSNKQPNSPKPTQPNQSNSQPASDDKANQKSSSKDNQSMSDSALDSILDQYSEDAKKTQKDYASQSKKDKNEKSNTKNPQLPTQDELKHKSKPAQSFNNDVNQKDTRATSLFETDPSISNNDDSGQFNVVDSKDTRQFVKSIAKDAHRIGQDNDIYASVMIAQAILESDSGRSALAKSPNHNLFGIKGAFEGNSVPFNTLEADGNQLYSINAGFRKYPSTKESLKDYSDLIKNGIDGNRTIYKPTWKSEADSYKDATSHLSKTYATDPNYAKKLNSIIKHYQLTQFDDERMPDLDKYERSIKDYDDSSDEFKPFREVSDSMPYPHGQCTWYVYNRMKQFGTSISGDLGDAHNWNNRAQYRDYQVSHTPKRHAAVVFEAGQFGADQHYGHVAFVEKVNSDGSIVISESNVKGLGIISHRTINAAAAEELSYITGK.

The signal sequence occupies residues 1 to 27 (MPKNKILIYLLSTTLVLPTLVSPTAYA). Disordered stretches follow at residues 25–83 (AYAD…TIDD), 134–226 (SDYE…SMSD), and 238–290 (EDAK…NQKD). 3 stretches are compositionally biased toward basic and acidic residues: residues 30-65 (PQKD…KADK), 73-82 (NNDKKFKTID), and 137-146 (EQPRNGEKST). Over residues 147-156 (NDSNKNSDNS) the composition is skewed to low complexity. Positions 157–175 (IKNDTDTQSSKQDKADNQK) are enriched in basic and acidic residues. The span at 176–192 (APKSNNTKPSTSNKQPN) shows a compositional bias: polar residues. Low complexity predominate over residues 214 to 226 (QKSSSKDNQSMSD). Residues 238-260 (EDAKKTQKDYASQSKKDKNEKSN) are compositionally biased toward basic and acidic residues. The interval 327–468 (IAKDAHRIGQ…LNSIIKHYQL (142 aa)) is N-acetylmuramoyl-L-alanine amidase. One can recognise a Peptidase C51 domain in the interval 488-617 (DYDDSSDEFK…AAAEELSYIT (130 aa)).

The protein in the N-terminal section; belongs to the N-acetylmuramoyl-L-alanine amidase 2 family.

The protein resides in the secreted. This chain is N-acetylmuramoyl-L-alanine amidase domain-containing protein SAOUHSC_02979, found in Staphylococcus aureus (strain NCTC 8325 / PS 47).